A 501-amino-acid chain; its full sequence is Histidine--tRNA ligase (501 aa).

The protein belongs to the class-II aminoacyl-tRNA synthetase family. Homodimer.

Its subcellular location is the cytoplasm. The enzyme catalyses tRNA(His) + L-histidine + ATP = L-histidyl-tRNA(His) + AMP + diphosphate + H(+). The sequence is that of Histidine--tRNA ligase from Methylocella silvestris (strain DSM 15510 / CIP 108128 / LMG 27833 / NCIMB 13906 / BL2).